We begin with the raw amino-acid sequence, 239 residues long: Ribosomal RNA small subunit methyltransferase G (239 aa).

Residues Gly-78, Phe-83, 129 to 130, and Arg-148 each bind S-adenosyl-L-methionine; that span reads AE.

This sequence belongs to the methyltransferase superfamily. RNA methyltransferase RsmG family.

The protein resides in the cytoplasm. In terms of biological role, specifically methylates the N7 position of a guanine in 16S rRNA. The polypeptide is Ribosomal RNA small subunit methyltransferase G (Clostridium perfringens (strain 13 / Type A)).